The chain runs to 875 residues: MLIQFLTKIFSNHNNRILKKFKKIVLSVNKLEKNFEKLSDKELQAQTELFRLRLRNGETLDDILPEAFALVREASKRVFSMRHFDVQILGGIALNKQCIAEMRTGEGKTLTSTLPAYLNALNGKGVHIVTMNDYLARRDAEKNTPLFEFLGLTVGLNLSEMSFFSKRKAYLSDITYGTNNEYGFDYLRDNMVFSPEERVQRKLNYALVDEVDSILIDEARTPLIISGPSEDSSELYKEINKIVPFLNSQKKEDSDIFCGTGDFSIDEKSKQIYLTERGLIKVEKILFDKKLMNTGESLYSSNNIILMHHVLSALRAHKLFVRNVDYLVKDNSVIIVDEHTGRTMPGRRWSDGLHQAIEAKENVSIKNENQTLASITFQNYFRLYEKIAGMTGTAETESFEFNSIYNLDTIVIPTNRKMIRKDFPDLVYMTEKEKINAIIQDIQKCIKLNQPVLVGTVSIEKSEIISKELLKLNINHNVLNAKFHAKEAEIIAQAGKPGSITIATNMAGRGTDIVLGGNLEVELNKYKNITSRKIEEIKKKWQSEHDLVVSAGGLHIIGTERHESRRIDNQLRGRSGRQGDTGSSRFYLSMEDSLMRIFASDKIVHMMKKLGLAFNEAIEHSWVTKAIENAQKKVENRNFDIRKQLLEYDDVINEQRSAIYSQRNKLIDARDIKLMIYDIFKDVLKKNIILYIPKNTFHDKWNVTDLKDKLNIDFYLNAPILDWINIEPNLTDKKIIKRIIDFARINYKNKEILIGSNNMRIIEKIIMLQTLDSLWKEHLAAVDYLRQGIHLRGYAQKDPKQEYKRESFNMFSSMLELLKFEVVSFLSRINSSYAKKYIDLNKHLVITHNNTMKISRNSPCLCGSGKKYKYCHGSL.

ATP is bound by residues Gln87, 105–109 (GEGKT), and Asp512. Positions 860, 862, 871, and 872 each coordinate Zn(2+).

It belongs to the SecA family. In terms of assembly, monomer and homodimer. Part of the essential Sec protein translocation apparatus which comprises SecA, SecYEG and auxiliary proteins SecDF-YajC and YidC. Zn(2+) serves as cofactor.

It localises to the cell inner membrane. It is found in the cytoplasm. It carries out the reaction ATP + H2O + cellular proteinSide 1 = ADP + phosphate + cellular proteinSide 2.. In terms of biological role, part of the Sec protein translocase complex. Interacts with the SecYEG preprotein conducting channel. Has a central role in coupling the hydrolysis of ATP to the transfer of proteins into and across the cell membrane, serving both as a receptor for the preprotein-SecB complex and as an ATP-driven molecular motor driving the stepwise translocation of polypeptide chains across the membrane. This chain is Protein translocase subunit SecA, found in Buchnera aphidicola subsp. Acyrthosiphon pisum (strain 5A).